The chain runs to 111 residues: BET1-like protein (111 aa).

At 1-86 the chain is on the cytoplasmic side; that stretch reads MADWARAQSP…MARSGQDNRK (86 aa). 2 positions are modified to phosphoserine: S9 and S37. Residues 15-77 form the t-SNARE coiled-coil homology domain; that stretch reads EILDRENKRM…TGSVKRFSTM (63 aa). The helical; Anchor for type IV membrane protein transmembrane segment at 87–107 threads the bilayer; the sequence is LLCGMAVGLIVAFFILSYFLS. Topologically, residues 108–111 are lumenal; the sequence is RART.

As to quaternary structure, component of a SNARE complex consisting of STX5, YKT6, GOSR1 and BET1L. Interacts with STX5.

It localises to the golgi apparatus membrane. Its subcellular location is the golgi apparatus. The protein localises to the trans-Golgi network membrane. Its function is as follows. Vesicle SNARE required for targeting and fusion of retrograde transport vesicles with the Golgi complex. Required for the integrity of the Golgi complex. This is BET1-like protein from Homo sapiens (Human).